The primary structure comprises 244 residues: EKC/KEOPS complex subunit Tp53rkb (244 aa).

In terms of domain architecture, Protein kinase spans 24-244; the sequence is LSGLELVQQG…LRGRKRSMVG (221 aa). Ser25 is subject to Phosphoserine. ATP contacts are provided by residues 30–38 and Lys51; that span reads VQQGAEARV. The Nuclear localization signal signature appears at 69–86; it reads RRRTVQEARALLRCRRAG. Asp153 functions as the Proton acceptor in the catalytic mechanism.

It belongs to the protein kinase superfamily. BUD32 family. Component of the EKC/KEOPS complex composed of at least GON7, TP53RK, TPRKB, OSGEP and LAGE3; the whole complex dimerizes.

Its subcellular location is the nucleus. It catalyses the reaction L-seryl-[protein] + ATP = O-phospho-L-seryl-[protein] + ADP + H(+). The catalysed reaction is L-threonyl-[protein] + ATP = O-phospho-L-threonyl-[protein] + ADP + H(+). In terms of biological role, component of the EKC/KEOPS complex that is required for the formation of a threonylcarbamoyl group on adenosine at position 37 (t(6)A37) in tRNAs that read codons beginning with adenine. The complex is probably involved in the transfer of the threonylcarbamoyl moiety of threonylcarbamoyl-AMP (TC-AMP) to the N6 group of A37. TP53RK has ATPase activity in the context of the EKC/KEOPS complex and likely plays a supporting role to the catalytic subunit OSGEP. Atypical protein kinase that phosphorylates 'Ser-15' of p53/TP53 protein and may therefore participate in its activation. The sequence is that of EKC/KEOPS complex subunit Tp53rkb from Mus musculus (Mouse).